Consider the following 571-residue polypeptide: Urease subunit alpha (571 aa).

The 441-residue stretch at glycine 131–phenylalanine 571 folds into the Urease domain. Ni(2+) contacts are provided by histidine 136, histidine 138, and lysine 219. At lysine 219 the chain carries N6-carboxylysine. Residue histidine 221 coordinates substrate. Ni(2+) contacts are provided by histidine 248 and histidine 274. Histidine 322 functions as the Proton donor in the catalytic mechanism. Residue aspartate 362 participates in Ni(2+) binding.

The protein belongs to the metallo-dependent hydrolases superfamily. Urease alpha subunit family. Heterotrimer of UreA (gamma), UreB (beta) and UreC (alpha) subunits. Three heterotrimers associate to form the active enzyme. Ni cation serves as cofactor. Carboxylation allows a single lysine to coordinate two nickel ions.

Its subcellular location is the cytoplasm. It carries out the reaction urea + 2 H2O + H(+) = hydrogencarbonate + 2 NH4(+). It functions in the pathway nitrogen metabolism; urea degradation; CO(2) and NH(3) from urea (urease route): step 1/1. This is Urease subunit alpha from Nostoc punctiforme (strain ATCC 29133 / PCC 73102).